Reading from the N-terminus, the 562-residue chain is Dihydroxy-acid dehydratase (562 aa).

Residue Asp-80 coordinates Mg(2+). Position 121 (Cys-121) interacts with [2Fe-2S] cluster. Residues Asp-122 and Lys-123 each coordinate Mg(2+). Lys-123 bears the N6-carboxylysine mark. Cys-194 serves as a coordination point for [2Fe-2S] cluster. Position 446 (Glu-446) interacts with Mg(2+). Ser-472 functions as the Proton acceptor in the catalytic mechanism.

Belongs to the IlvD/Edd family. As to quaternary structure, homodimer. Requires [2Fe-2S] cluster as cofactor. The cofactor is Mg(2+).

The enzyme catalyses (2R)-2,3-dihydroxy-3-methylbutanoate = 3-methyl-2-oxobutanoate + H2O. It carries out the reaction (2R,3R)-2,3-dihydroxy-3-methylpentanoate = (S)-3-methyl-2-oxopentanoate + H2O. It functions in the pathway amino-acid biosynthesis; L-isoleucine biosynthesis; L-isoleucine from 2-oxobutanoate: step 3/4. The protein operates within amino-acid biosynthesis; L-valine biosynthesis; L-valine from pyruvate: step 3/4. Functionally, functions in the biosynthesis of branched-chain amino acids. Catalyzes the dehydration of (2R,3R)-2,3-dihydroxy-3-methylpentanoate (2,3-dihydroxy-3-methylvalerate) into 2-oxo-3-methylpentanoate (2-oxo-3-methylvalerate) and of (2R)-2,3-dihydroxy-3-methylbutanoate (2,3-dihydroxyisovalerate) into 2-oxo-3-methylbutanoate (2-oxoisovalerate), the penultimate precursor to L-isoleucine and L-valine, respectively. This chain is Dihydroxy-acid dehydratase, found in Staphylococcus haemolyticus (strain JCSC1435).